The sequence spans 282 residues: Elongation factor Ts (282 aa).

Residues 80-83 (TDFV) are involved in Mg(2+) ion dislocation from EF-Tu.

This sequence belongs to the EF-Ts family.

The protein resides in the cytoplasm. Its function is as follows. Associates with the EF-Tu.GDP complex and induces the exchange of GDP to GTP. It remains bound to the aminoacyl-tRNA.EF-Tu.GTP complex up to the GTP hydrolysis stage on the ribosome. In Chlamydia trachomatis serovar D (strain ATCC VR-885 / DSM 19411 / UW-3/Cx), this protein is Elongation factor Ts (tsf).